A 388-amino-acid chain; its full sequence is Cystathionine gamma-synthase (388 aa).

A disordered region spans residues 1–24; the sequence is MSEDRTGHQGISGPATRAIHAGYR. K208 is subject to N6-(pyridoxal phosphate)lysine.

The protein belongs to the trans-sulfuration enzymes family. In terms of assembly, homotetramer. The cofactor is pyridoxal 5'-phosphate.

It is found in the cytoplasm. It carries out the reaction O-succinyl-L-homoserine + L-cysteine = L,L-cystathionine + succinate + H(+). In terms of biological role, catalyzes the formation of L-cystathionine from O-succinyl-L-homoserine (OSHS) and L-cysteine, via a gamma-replacement reaction. In the absence of thiol, catalyzes gamma-elimination to form 2-oxobutanoate, succinate and ammonia. This chain is Cystathionine gamma-synthase (metB), found in Mycobacterium bovis (strain ATCC BAA-935 / AF2122/97).